The chain runs to 66 residues: Surface composition regulator (66 aa).

This sequence belongs to the GlgS family.

Major determinant of cell surface composition. Negatively regulates motility, adhesion and synthesis of biofilm exopolysaccharides. This is Surface composition regulator from Shigella dysenteriae serotype 1 (strain Sd197).